Here is a 119-residue protein sequence, read N- to C-terminus: Large ribosomal subunit protein uL18 (119 aa).

This sequence belongs to the universal ribosomal protein uL18 family. As to quaternary structure, part of the 50S ribosomal subunit; part of the 5S rRNA/L5/L18/L25 subcomplex. Contacts the 5S and 23S rRNAs.

Functionally, this is one of the proteins that bind and probably mediate the attachment of the 5S RNA into the large ribosomal subunit, where it forms part of the central protuberance. The sequence is that of Large ribosomal subunit protein uL18 from Nitrosomonas europaea (strain ATCC 19718 / CIP 103999 / KCTC 2705 / NBRC 14298).